Here is a 546-residue protein sequence, read N- to C-terminus: Probable protein kinase UbiB (546 aa).

The 379-residue stretch at 123–501 (DFQEIPLASA…RTNHGQALFL (379 aa)) folds into the Protein kinase domain. ATP is bound by residues 129-137 (LASASISQV) and Lys152. The active-site Proton acceptor is Asp287. A run of 2 helical transmembrane segments spans residues 497–517 (QALFLFGVGATLVTSSIFLYI) and 521–541 (YLKIFSIFLFVIGIFIWTIGW).

Belongs to the ABC1 family. UbiB subfamily.

It is found in the cell inner membrane. The protein operates within cofactor biosynthesis; ubiquinone biosynthesis [regulation]. Functionally, is probably a protein kinase regulator of UbiI activity which is involved in aerobic coenzyme Q (ubiquinone) biosynthesis. The chain is Probable protein kinase UbiB from Blochmanniella pennsylvanica (strain BPEN).